A 488-amino-acid polypeptide reads, in one-letter code: MAYSQGGGKKKVCYYYDGDIGNYYYGQGHPMKPHRIRMTHNLLLNYGLYRKMEIYRPHKATAEEMTKYHSDEYIKFLRSIRPDNMSEYSKQMQRFNVGEDCPVFDGLFEFCQLSTGGSVAGAVKLNRQQTDMAVNWAGGLHHAKKSEASGFCYVNDIVLAILELLKYHQRVLYIDIDIHHGDGVEEAFYTTDRVMTVSFHKYGEYFPGTGDLRDIGAGKGKYYAVNFPMRDGIDDESYGQIFKPIISKVMEMYQPSAVVLQCGADSLSGDRLGCFNLTVKGHAKCVEVAKTFNLPLLMLGGGGYTIRNVARCWTYETAVALDCEIPNELPYNDYFEYFGPDFKLHISPSNMTNQNTPEYMEKIKQRLFENLRMLPHAPGVQMQAIPEDAVHEDSGDEDGEDPDKRISIRASDKRIACDEEFSDSEDEGEGGRRNVADHKKGAKKARIEEDKKETEDKKTDVKEEDKSKDNSGEKTDPKGAKSEQLSNP.

Positions 9–322 (KKKVCYYYDG…WTYETAVALD (314 aa)) are histone deacetylase. 1D-myo-inositol 1,4,5,6-tetrakisphosphate-binding residues include Gly-28 and Lys-32. Lys-75 bears the N6-acetyllysine; alternate mark. Lys-75 is covalently cross-linked (Glycyl lysine isopeptide (Lys-Gly) (interchain with G-Cter in SUMO2); alternate). Residue His-142 is part of the active site. Ca(2+) is bound by residues Asp-175, Asp-177, His-179, Phe-188, Thr-191, Val-194, Ser-198, and Phe-199. Zn(2+) contacts are provided by Asp-177 and His-179. Position 221 is an N6-acetyllysine (Lys-221). Ca(2+) is bound at residue Tyr-223. Cys-262 is modified (S-nitrosocysteine). Asp-265 contributes to the Zn(2+) binding site. Arg-271 provides a ligand contact to 1D-myo-inositol 1,4,5,6-tetrakisphosphate. Cys-274 carries the S-nitrosocysteine modification. The interval 389–488 (AVHEDSGDED…GAKSEQLSNP (100 aa)) is disordered. Residues Ser-394, Ser-407, Ser-422, and Ser-424 each carry the phosphoserine modification. Over residues 402 to 417 (PDKRISIRASDKRIAC) the composition is skewed to basic and acidic residues. Acidic residues predominate over residues 418–428 (DEEFSDSEDEG). The segment covering 429-481 (EGGRRNVADHKKGAKKARIEEDKKETEDKKTDVKEEDKSKDNSGEKTDPKGAK) has biased composition (basic and acidic residues). Residues Lys-439, Lys-452, Lys-458, Lys-462, Lys-478, and Lys-481 each participate in a glycyl lysine isopeptide (Lys-Gly) (interchain with G-Cter in SUMO2) cross-link.

Belongs to the histone deacetylase family. HD type 1 subfamily. As to quaternary structure, part of the core histone deacetylase (HDAC) complex composed of HDAC1, HDAC2, RBBP4 and RBBP7, the core complex associates with SIN3, SAP18 and SAP30 to form the SIN3 HDAC complex. Component of the nucleosome remodeling and deacetylase (NuRD) repressor complex, composed of core proteins MTA1, MTA2, MTA3, RBBP4, RBBP7, HDAC1, HDAC2, MBD2, MBD3, and peripherally associated proteins CDK2AP1, CDK2AP2, GATAD2A, GATAD2B, CHD3, CHD4 and CHD5. The exact stoichiometry of the NuRD complex is unknown, and some subunits such as MBD2 and MBD3, GATAD2A and GATAD2B, and CHD3, CHD4 and CHD5 define mutually exclusive NuRD complexes. Component of a RCOR/GFI/KDM1A/HDAC complex. Component of a BHC histone deacetylase complex that contains HDAC1, HDAC2, HMG20B, KDM1A, RCOR1 and PHF21A. The BHC complex may also contain ZMYM2, ZNF217, ZMYM3, GSE1 and GTF2I. Part of a complex containing the core histones H2A, H2B, H3 and H4, DEK and unphosphorylated DAXX. Part of a complex containing ATR and CHD4. Forms a heterologous complex at least with YY1. Interacts in the late S-phase of DNA-replication with DNMT1 in the other transcriptional repressor complex composed of DNMT1, DMAP1, PCNA, CAF1. Component of a mSin3A corepressor complex that contains SIN3A, SAP130, SUDS3, ARID4B, HDAC1 and HDAC2. Part of a complex composed of TRIM28, HDAC1, HDAC2 and EHMT2. Part of a complex containing at least CDYL, MIER1, MIER2, HDAC1 and HDAC2. Component of a histone deacetylase complex containing DNTTIP1, ZNF541, HDAC1 and HDAC2. Forms a complex comprising APPL1, RUVBL2, APPL2, CTNNB1 and HDAC1. Interacts directly with GFI1. Interacts directly with GFI1B. Interacts with APEX1; the interaction is not dependent on the acetylated status of APEX1. Interacts with ATR. Interacts with BCL6 (non-acetylated form). Interacts with BEND3. Interacts with CBFA2T3. Interacts with CDK2AP1. Interacts with CHD4. Interacts with CHD5. Interacts with CHFR. Interacts with CRY1. Interacts with DNMT1. Interacts with GATAD2A. Interacts with HCFC1. Interacts with HDAC7. Interacts with HDAC10. Interacts with INSM1. Interacts with KDM4A. Interacts with MACROH2A1 (via the non-histone region). Interacts with MBD3L2. Interacts with MTA1, with a preference for sumoylated MTA1. Interacts with NACC2. Interacts with NRIP1. Interacts with PELP1. Interacts with PIMREG. Interacts with PRDM6. Interacts with PWWP2B Interacts with SAP30. Interacts with SAP30L. Interacts with SETDB1. Interacts with SIX3. Interacts with SMARCAD1. Interacts with SNW1. Interacts with SPHK2. Interacts with SPEN/MINT. Interacts (CK2 phosphorylated form) with SP3. Interacts with SUV39H1. Interacts with TSHZ3 (via its N-terminus). Interacts with ZMYND8. Interacts with ZNF431. Interacts with ZNF263; recruited to the SIX3 promoter along with other proteins involved in chromatin modification and transcriptional corepression where it contributes to transcriptional repression. Identified in a complex with HDAC1, KCTD19, DNTTIP1 and ZNF541. Component of the SIN3B complex, which includes SIN3B, HDAC2, PHF12 and MORF4L1; interacts directly with all subunits. Zn(2+) serves as cofactor. Requires Ca(2+) as cofactor. S-nitrosylated by GAPDH. In neurons, S-nitrosylation at Cys-262 and Cys-274 does not affect enzyme activity, but induces HDAC2 release from chromatin. This in turn increases acetylation of histones surrounding neurotrophin-dependent gene promoters and promotes their transcription. In embryonic cortical neurons, S-Nitrosylation regulates dendritic growth and branching.

Its subcellular location is the nucleus. It is found in the cytoplasm. The catalysed reaction is N(6)-acetyl-L-lysyl-[histone] + H2O = L-lysyl-[histone] + acetate. It catalyses the reaction N(6)-acetyl-L-lysyl-[protein] + H2O = L-lysyl-[protein] + acetate. The enzyme catalyses N(6)-(2E)-butenoyl-L-lysyl-[protein] + H2O = (2E)-2-butenoate + L-lysyl-[protein]. It carries out the reaction N(6)-(2-hydroxyisobutanoyl)-L-lysyl-[protein] + H2O = 2-hydroxy-2-methylpropanoate + L-lysyl-[protein]. The catalysed reaction is N(6)-[(S)-lactoyl]-L-lysyl-[protein] + H2O = (S)-lactate + L-lysyl-[protein]. Its activity is regulated as follows. Inositol tetraphosphate (1D-myo-inositol 1,4,5,6-tetrakisphosphate) may act as an intermolecular glue between HDAC2 and N-Cor repressor complex components. Histone deacetylase that catalyzes the deacetylation of lysine residues on the N-terminal part of the core histones (H2A, H2B, H3 and H4). Histone deacetylation gives a tag for epigenetic repression and plays an important role in transcriptional regulation, cell cycle progression and developmental events. Histone deacetylases act via the formation of large multiprotein complexes. Forms transcriptional repressor complexes by associating with MAD, SIN3, YY1 and N-COR. Component of a RCOR/GFI/KDM1A/HDAC complex that suppresses, via histone deacetylase (HDAC) recruitment, a number of genes implicated in multilineage blood cell development. Acts as a component of the histone deacetylase NuRD complex which participates in the remodeling of chromatin. Component of the SIN3B complex that represses transcription and counteracts the histone acetyltransferase activity of EP300 through the recognition H3K27ac marks by PHF12 and the activity of the histone deacetylase HDAC2. Also deacetylates non-histone targets: deacetylates TSHZ3, thereby regulating its transcriptional repressor activity. May be involved in the transcriptional repression of circadian target genes, such as PER1, mediated by CRY1 through histone deacetylation. Involved in MTA1-mediated transcriptional corepression of TFF1 and CDKN1A. In addition to protein deacetylase activity, also acts as a protein-lysine deacylase by recognizing other acyl groups: catalyzes removal of (2E)-butenoyl (crotonyl), lactoyl (lactyl) and 2-hydroxyisobutanoyl (2-hydroxyisobutyryl) acyl groups from lysine residues, leading to protein decrotonylation, delactylation and de-2-hydroxyisobutyrylation, respectively. The polypeptide is Histone deacetylase 2 (Mus musculus (Mouse)).